Here is a 735-residue protein sequence, read N- to C-terminus: Photosystem I P700 chlorophyll a apoprotein A2 (735 aa).

The next 8 helical transmembrane spans lie at Ile47 to Ala70, Leu136 to Gln159, Leu176 to Ile200, Met274 to Tyr292, Leu331 to Tyr354, Ala370 to Ile396, Ala418 to His440, and Phe518 to Val536. The [4Fe-4S] cluster site is built by Cys560 and Cys569. 2 helical membrane-spanning segments follow: residues Ala576 to Trp597 and Leu644 to Ile666. Residues His655, Met663, and Tyr671 each coordinate chlorophyll a. Residue Trp672 coordinates phylloquinone. A helical transmembrane segment spans residues Val708–Ala728.

Belongs to the PsaA/PsaB family. As to quaternary structure, the PsaA/B heterodimer binds the P700 chlorophyll special pair and subsequent electron acceptors. PSI consists of a core antenna complex that captures photons, and an electron transfer chain that converts photonic excitation into a charge separation. The eukaryotic PSI reaction center is composed of at least 11 subunits. P700 is a chlorophyll a/chlorophyll a' dimer, A0 is one or more chlorophyll a, A1 is one or both phylloquinones and FX is a shared 4Fe-4S iron-sulfur center. serves as cofactor.

The protein resides in the plastid. It localises to the chloroplast thylakoid membrane. The catalysed reaction is reduced [plastocyanin] + hnu + oxidized [2Fe-2S]-[ferredoxin] = oxidized [plastocyanin] + reduced [2Fe-2S]-[ferredoxin]. In terms of biological role, psaA and PsaB bind P700, the primary electron donor of photosystem I (PSI), as well as the electron acceptors A0, A1 and FX. PSI is a plastocyanin/cytochrome c6-ferredoxin oxidoreductase, converting photonic excitation into a charge separation, which transfers an electron from the donor P700 chlorophyll pair to the spectroscopically characterized acceptors A0, A1, FX, FA and FB in turn. Oxidized P700 is reduced on the lumenal side of the thylakoid membrane by plastocyanin or cytochrome c6. The chain is Photosystem I P700 chlorophyll a apoprotein A2 from Tupiella akineta (Green alga).